Here is a 454-residue protein sequence, read N- to C-terminus: Repulsive guidance molecule A (454 aa).

A signal peptide spans 1–47; sequence MQPPRERLVVTGRAGWMGMGRGAGRSALGLWPTLAFLLCSFPAAISP. Positions 48–169 are cleaved as a propeptide — removed in mature form; that stretch reads CKILKCNSEF…NYTHCGLFGD (122 aa). Over residues 114-126 the composition is skewed to polar residues; that stretch reads HNCSKDGPTSQPR. A disordered region spans residues 114-141; the sequence is HNCSKDGPTSQPRVRTLPPAGDSQERSD. Asn115 and Asn160 each carry an N-linked (GlcNAc...) asparagine glycan. Disulfide bonds link Cys146–Cys227 and Cys164–Cys316. Asn388 carries an N-linked (GlcNAc...) asparagine glycan. The GPI-anchor amidated alanine moiety is linked to residue Ala427. Positions 428 to 454 are cleaved as a propeptide — removed in mature form; the sequence is AAATTFPLAPQILLGTIPLLVLLPVLW.

Belongs to the repulsive guidance molecule (RGM) family. Interacts with NEO1, BMP2 and BMP4. Post-translationally, autocatalytically cleaved at low pH; the two chains remain linked via two disulfide bonds. Expressed in gradient in periventricular layers of the developing nervous system. In adult, expressed in scattered cells throughout the brain.

It localises to the cell membrane. Functionally, member of the repulsive guidance molecule (RGM) family that performs several functions in the developing and adult nervous system. Regulates cephalic neural tube closure, inhibits neurite outgrowth and cortical neuron branching, and the formation of mature synapses. Binding to its receptor NEO1/neogenin induces activation of RHOA-ROCK1/Rho-kinase signaling pathway through UNC5B-ARHGEF12/LARG-PTK2/FAK1 cascade, leading to collapse of the neuronal growth cone and neurite outgrowth inhibition. Furthermore, RGMA binding to NEO1/neogenin leads to HRAS inactivation by influencing HRAS-PTK2/FAK1-AKT1 pathway. It also functions as a bone morphogenetic protein (BMP) coreceptor that may signal through SMAD1, SMAD5, and SMAD8. The sequence is that of Repulsive guidance molecule A (Rgma) from Mus musculus (Mouse).